The chain runs to 229 residues: Small ribosomal subunit protein uS3 (229 aa).

In terms of domain architecture, KH type-2 spans 39–107; sequence IRKFLKKELY…EVFINIKEEK (69 aa).

It belongs to the universal ribosomal protein uS3 family. In terms of assembly, part of the 30S ribosomal subunit. Forms a tight complex with proteins S10 and S14.

Its function is as follows. Binds the lower part of the 30S subunit head. Binds mRNA in the 70S ribosome, positioning it for translation. In Nitratiruptor sp. (strain SB155-2), this protein is Small ribosomal subunit protein uS3.